The primary structure comprises 82 residues: Translational regulator CsrA (82 aa).

The protein belongs to the CsrA/RsmA family. Homodimer; the beta-strands of each monomer intercalate to form a hydrophobic core, while the alpha-helices form wings that extend away from the core.

Its subcellular location is the cytoplasm. In terms of biological role, a translational regulator that binds mRNA to regulate translation initiation and/or mRNA stability. Usually binds in the 5'-UTR at or near the Shine-Dalgarno sequence preventing ribosome-binding, thus repressing translation. Its main target seems to be the major flagellin gene, while its function is anatagonized by FliW. The chain is Translational regulator CsrA from Geobacillus sp. (strain WCH70).